We begin with the raw amino-acid sequence, 361 residues long: Peptide chain release factor 1 (361 aa).

At glutamine 237 the chain carries N5-methylglutamine. Positions 287–297 are enriched in basic and acidic residues; the sequence is KQQKEQSDTRK. The disordered stretch occupies residues 287 to 307; that stretch reads KQQKEQSDTRKNLVGSGDRSE.

Belongs to the prokaryotic/mitochondrial release factor family. Methylated by PrmC. Methylation increases the termination efficiency of RF1.

It is found in the cytoplasm. Its function is as follows. Peptide chain release factor 1 directs the termination of translation in response to the peptide chain termination codons UAG and UAA. The polypeptide is Peptide chain release factor 1 (Francisella philomiragia subsp. philomiragia (strain ATCC 25017 / CCUG 19701 / FSC 153 / O#319-036)).